Reading from the N-terminus, the 226-residue chain is Phosphoribosyl-dephospho-CoA transferase (226 aa).

Residues Asp148 and Asp150 contribute to the active site.

The protein belongs to the MdcG family.

The catalysed reaction is apo-[malonate decarboxylase ACP] + 2'-(5''-triphospho-alpha-D-ribosyl)-3'-dephospho-CoA = holo-[malonate decarboxylase ACP] + diphosphate. Functionally, transfers 2'-(5-triphosphoribosyl)-3'-dephosphocoenzyme-A to the apo-[acyl-carrier-protein] of the malonate decarboxylase to yield holo-[acyl-carrier-protein]. This chain is Phosphoribosyl-dephospho-CoA transferase, found in Bradyrhizobium diazoefficiens (strain JCM 10833 / BCRC 13528 / IAM 13628 / NBRC 14792 / USDA 110).